Here is a 185-residue protein sequence, read N- to C-terminus: Ribosome-recycling factor (185 aa).

This sequence belongs to the RRF family.

It is found in the cytoplasm. Responsible for the release of ribosomes from messenger RNA at the termination of protein biosynthesis. May increase the efficiency of translation by recycling ribosomes from one round of translation to another. The polypeptide is Ribosome-recycling factor (Listeria innocua serovar 6a (strain ATCC BAA-680 / CLIP 11262)).